A 325-amino-acid chain; its full sequence is MFARFTFRTCRPAGQAIRKYASEASPKPSSNVPLYGGLALAAGGAYYYWQRQQSPQALEAALKERSKVFIGGDQGWVDLKLAGIETLSHNVKRFRFEFPDSESVSGLHIASALLTKYKGPKDEKPTIRPYTPVSEEEQPGYLDLVVKQYPNGPMSTHLHNMAVGQQLSFKGPIPKYPWEQNKHDHICMIAGGTGITPMYQIIRKIFNNPNDKTKVTLVFGNITEEDILLKKELDILENTYPRRFRAFYLLDKPPAGWTQGTGYVTKELLKTVLPEPKTENIKIFVCGPPGMYKAVSGPKNSPKDQGELTGLLKELGYDKDQVYKF.

Residues 32–48 (VPLYGGLALAAGGAYYY) traverse the membrane as a helical segment. The region spanning 74–179 (QGWVDLKLAG…KGPIPKYPWE (106 aa)) is the FAD-binding FR-type domain. 182 to 217 (KHDHICMIAGGTGITPMYQIIRKIFNNPNDKTKVTL) is a binding site for FAD.

This sequence belongs to the flavoprotein pyridine nucleotide cytochrome reductase family. FAD serves as cofactor.

It is found in the mitochondrion outer membrane. The enzyme catalyses 2 Fe(III)-[cytochrome b5] + NADH = 2 Fe(II)-[cytochrome b5] + NAD(+) + H(+). In terms of biological role, may mediate the reduction of outer membrane cytochrome b5. This chain is NADH-cytochrome b5 reductase 2 (MCR1), found in Coccidioides immitis (strain RS) (Valley fever fungus).